The primary structure comprises 1322 residues: FERM and PDZ domain-containing protein 4 (1322 aa).

A WW domain is found at 33–66 (QVPPYGWEMTANRDGRDYFINHMTQAIPFDDPRL). The PDZ domain maps to 78-155 (KVEMRRDPVL…SILLTVIQPY (78 aa)). Residues 204 to 519 (NVLKVYLENG…GYYRLLVDSR (316 aa)) enclose the FERM domain. Disordered regions lie at residues 809-847 (APPP…EIPV), 900-927 (SPES…TAQK), 952-983 (EFPA…PPKV), 1027-1080 (RKSK…STFN), 1105-1148 (SGLE…GQGD), 1160-1180 (AKDL…PSKL), and 1207-1227 (HFSL…TGSS). Positions 902 to 921 (ESSSDSGNETNSSEMTESSE) are enriched in low complexity. The span at 1041–1054 (NGNTTGKKQQGTKT) shows a compositional bias: low complexity. Over residues 1067–1080 (TVSSRDSQHLSTFN) the composition is skewed to polar residues. Residues 1207 to 1217 (HFSLQSSQGSS) are compositionally biased toward polar residues.

As to quaternary structure, interacts (via C-terminus) with DLG1, DLG2, DLG3 and DLG4/PSD95. Interacts (via N-terminus) with ARHGEF7; the interaction is mediated by the PDZ domain. Interacts with GPSM2 (via TPR repeat region).

Its subcellular location is the cell projection. The protein resides in the dendritic spine. In terms of biological role, positive regulator of dendritic spine morphogenesis and density. Required for the maintenance of excitatory synaptic transmission. Binds phosphatidylinositol 4,5-bisphosphate. The protein is FERM and PDZ domain-containing protein 4 (FRMPD4) of Homo sapiens (Human).